The primary structure comprises 32 residues: Photosystem I reaction center subunit XII (32 aa).

Residues 3-23 (SISDGQIVVALISAFIIVILA) traverse the membrane as a helical segment.

The protein belongs to the PsaM family.

The protein resides in the plastid. The protein localises to the chloroplast thylakoid membrane. This chain is Photosystem I reaction center subunit XII, found in Anthoceros angustus (Hornwort).